The following is a 376-amino-acid chain: Carbamoyl phosphate synthase small chain (376 aa).

The CPSase stretch occupies residues 1–184 (MKAILALADG…SEGYQQQTGE (184 aa)). Residues Ser45, Gly236, and Gly238 each contribute to the L-glutamine site. The region spanning 188 to 374 (KVVAYDFGIK…ADLMEKNRQS (187 aa)) is the Glutamine amidotransferase type-1 domain. The active-site Nucleophile is Cys263. The L-glutamine site is built by Leu264, Gln267, Asn305, Gly307, and Phe308. Residues His347 and Glu349 contribute to the active site.

The protein belongs to the CarA family. Composed of two chains; the small (or glutamine) chain promotes the hydrolysis of glutamine to ammonia, which is used by the large (or ammonia) chain to synthesize carbamoyl phosphate. Tetramer of heterodimers (alpha,beta)4.

It carries out the reaction hydrogencarbonate + L-glutamine + 2 ATP + H2O = carbamoyl phosphate + L-glutamate + 2 ADP + phosphate + 2 H(+). The catalysed reaction is L-glutamine + H2O = L-glutamate + NH4(+). Its pathway is amino-acid biosynthesis; L-arginine biosynthesis; carbamoyl phosphate from bicarbonate: step 1/1. The protein operates within pyrimidine metabolism; UMP biosynthesis via de novo pathway; (S)-dihydroorotate from bicarbonate: step 1/3. Functionally, small subunit of the glutamine-dependent carbamoyl phosphate synthetase (CPSase). CPSase catalyzes the formation of carbamoyl phosphate from the ammonia moiety of glutamine, carbonate, and phosphate donated by ATP, constituting the first step of 2 biosynthetic pathways, one leading to arginine and/or urea and the other to pyrimidine nucleotides. The small subunit (glutamine amidotransferase) binds and cleaves glutamine to supply the large subunit with the substrate ammonia. This Syntrophotalea carbinolica (strain DSM 2380 / NBRC 103641 / GraBd1) (Pelobacter carbinolicus) protein is Carbamoyl phosphate synthase small chain.